Consider the following 809-residue polypeptide: Glycerol-3-phosphate acyltransferase (809 aa).

Positions 309–314 (HRSHMD) match the HXXXXD motif motif.

It belongs to the GPAT/DAPAT family.

The protein localises to the cell inner membrane. The enzyme catalyses sn-glycerol 3-phosphate + an acyl-CoA = a 1-acyl-sn-glycero-3-phosphate + CoA. Its pathway is phospholipid metabolism; CDP-diacylglycerol biosynthesis; CDP-diacylglycerol from sn-glycerol 3-phosphate: step 1/3. In Shewanella oneidensis (strain ATCC 700550 / JCM 31522 / CIP 106686 / LMG 19005 / NCIMB 14063 / MR-1), this protein is Glycerol-3-phosphate acyltransferase.